The sequence spans 142 residues: Universal stress protein G (142 aa).

The protein belongs to the universal stress protein A family.

This is Universal stress protein G (uspG) from Shigella flexneri.